The following is a 406-amino-acid chain: 4-hydroxy-3-methylbut-2-en-1-yl diphosphate synthase (ferredoxin) (406 aa).

[4Fe-4S] cluster contacts are provided by C315, C318, C349, and E356.

This sequence belongs to the IspG family. It depends on [4Fe-4S] cluster as a cofactor.

It carries out the reaction (2E)-4-hydroxy-3-methylbut-2-enyl diphosphate + 2 oxidized [2Fe-2S]-[ferredoxin] + H2O = 2-C-methyl-D-erythritol 2,4-cyclic diphosphate + 2 reduced [2Fe-2S]-[ferredoxin] + H(+). Its pathway is isoprenoid biosynthesis; isopentenyl diphosphate biosynthesis via DXP pathway; isopentenyl diphosphate from 1-deoxy-D-xylulose 5-phosphate: step 5/6. Functionally, converts 2C-methyl-D-erythritol 2,4-cyclodiphosphate (ME-2,4cPP) into 1-hydroxy-2-methyl-2-(E)-butenyl 4-diphosphate. The polypeptide is 4-hydroxy-3-methylbut-2-en-1-yl diphosphate synthase (ferredoxin) (Trichodesmium erythraeum (strain IMS101)).